The primary structure comprises 426 residues: Tektin-1 (426 aa).

Coiled-coil stretches lie at residues 21-84, 268-307, and 339-383; these read KNQY…LEQL, LKETKAARDQLAAHLAKVMEEIACQEKNMTVLEKAILDQE, and KEVG…ENTI. Residues 396–426 are disordered; the sequence is SNPLRDGGDQGQWARACAPTPSAEDGTSHTD.

This sequence belongs to the tektin family. In terms of assembly, microtubule inner protein component of sperm flagellar doublet microtubules. In terms of processing, ubiquitinated, leading to its degradation. Deubiquitinated by USP16, promoting its stability.

It localises to the cytoplasm. The protein localises to the cytoskeleton. Its subcellular location is the cilium axoneme. It is found in the flagellum axoneme. Functionally, microtubule inner protein (MIP) part of the dynein-decorated doublet microtubules (DMTs) in cilia and flagellar axoneme. Forms filamentous polymers in the walls of ciliary and flagellar microtubules. This chain is Tektin-1 (TEKT1), found in Canis lupus familiaris (Dog).